We begin with the raw amino-acid sequence, 38 residues long: Photosystem I reaction center subunit IX (38 aa).

The helical transmembrane segment at 4–24 (FLTTAPVVAAIWFTATAGILI) threads the bilayer.

Belongs to the PsaJ family.

It is found in the cellular thylakoid membrane. May help in the organization of the PsaE and PsaF subunits. This Synechococcus sp. (strain CC9902) protein is Photosystem I reaction center subunit IX.